Reading from the N-terminus, the 872-residue chain is Adhesive plaque matrix protein (872 aa).

The first 20 residues, 1–20 (MEGIKLNLCLLCIFSCDIFA), serve as a signal peptide directing secretion. The segment at 21–41 (LSNGNIHNVYGSAYSGASAGA) is nonrepetitive linker. Tandem repeats lie at residues 124-133 (YKAKTSYPPS), 134-143 (YKHKITYPPT), 144-153 (YKPKITYPPT), 154-163 (YKQKPSYPPS), 174-183 (YKPKITYPPT), 184-192 (YKRKPSYTP), 193-202 (YKPKATYPPT), 203-212 (YKPKITYPPT), 213-221 (YKRKPSYTP), 222-231 (YKPKTTYPPT), 232-241 (YKPKISYPSI), 242-251 (YKPKASYVSS), 252-261 (YKSKKTYPPT), 262-271 (YKPKISYPPT), 272-281 (YKPKPSYPPT), 282-291 (YKPKVTYPPT), 292-301 (YKPKPSYPPT), 302-311 (YKPKITYPPT), 312-321 (YKPKPSYPTP), 322-331 (YKQKPSYPPI), 332-341 (YKSKSSYPTS), 342-351 (YKSKKTYPPT), 352-361 (YKPKITYPPT), 362-371 (YKPKPSYPPS), 372-381 (YKPKKTYSPT), 382-391 (YKPKITYPPT), 402-411 (YKPKTTYPPT), 412-421 (YKPKISYPPT), 422-431 (YKPKASYVSS), 432-441 (YKSKKTYPPT), 442-451 (YKPKISYPPT), 452-461 (YKPKPSYPPT), 462-471 (YKPKITYPPT), 472-481 (YKPKPSYPPT), 482-491 (YKPKITYPPT), 502-511 (YKQKPSYPPI), 512-521 (YKSKSSYPTS), 522-531 (YKSKKTYPPT), 532-541 (YKPKITYPPT), 542-551 (YKPKPSYPPS), 552-561 (YKPKTTYPPT), 562-571 (YKPKIRYPPT), 572-581 (YKPKASYPPT), 582-591 (YKPKITYPPT), 602-611 (YKQKPSYPPI), 612-621 (YKSKSSYPTA), 622-631 (YKSKKTYPPT), 632-641 (YKPKITYPPT), 642-651 (YKPKPSYPPS), 652-661 (YRPKITYPPT), 662-671 (YKPKKSYPQA), 672-681 (YKSKGSYPPS), 682-691 (YQPKKTYPPS), 702-711 (YKPKISYPPT), 712-721 (YKTKPSYPAS), 722-731 (YKRKTSYPPT), 732-741 (YKPKISYPST), 742-751 (YKAKPSYPPT), 752-761 (YKPKPSYASS), 762-771 (YKPKIRYPPT), 772-781 (YKPKPSYASS), 782-791 (YKPKIRYPPT), 792-801 (YKPKPSYASS), 812-821 (YKPKPSYASS), 822-831 (YKPKITYPPT), 832-841 (YKPKISYPPT), 842-851 (YKPKITYPPT), 852-861 (YKPKISYPPA), and 862-871 (YKPKISYPSQ). A 69 X 10 AA tandem repeats of Y-[KRQ]-[PSTAHQR]-K-[AIPTSKGV]-[STR]-Y-[PTSVA]-[PSTQA]-[STYIPAQ] region spans residues 124–871 (YKAKTSYPPS…YKPKISYPSQ (748 aa)). The interval 184–192 (YKRKPSYTP) is nonapeptide 1. Residues 213–221 (YKRKPSYTP) are nonapeptide 2. 2 stretches are compositionally biased toward pro residues: residues 273-282 (KPKPSYPPTY) and 291-302 (TYKPKPSYPPTY). Positions 273–781 (KPKPSYPPTY…YKPKPSYASS (509 aa)) are disordered. Positions 320–360 (TPYKQKPSYPPIYKSKSSYPTSYKSKKTYPPTYKPKITYPP) are enriched in low complexity. Positions 361-372 (TYKPKPSYPPSY) are enriched in pro residues. The segment covering 377–390 (TYSPTYKPKITYPP) has biased composition (low complexity). The span at 391-402 (TYKPKPSYPPSY) shows a compositional bias: pro residues. Positions 403–450 (KPKTTYPPTYKPKISYPPTYKPKASYVSSYKSKKTYPPTYKPKISYPP) are enriched in low complexity. Pro residues-rich tracts occupy residues 451–462 (TYKPKPSYPPTY) and 471–482 (TYKPKPSYPPTY). The segment covering 501-540 (PYKQKPSYPPIYKSKSSYPTSYKSKKTYPPTYKPKITYPP) has biased composition (low complexity). A compositionally biased stretch (pro residues) spans 541 to 552 (TYKPKPSYPPSY). 2 stretches are compositionally biased toward low complexity: residues 568–590 (YPPT…TYPP) and 600–640 (TPYK…TYPP). Positions 641-652 (TYKPKPSYPPSY) are enriched in pro residues. Composition is skewed to low complexity over residues 677-690 (SYPP…TYPP) and 698-719 (YPPT…PSYP). The segment covering 754–763 (PKPSYASSYK) has biased composition (low complexity).

Hydroxylated on proline (mono- or dihydroxylation) and tyrosine residues (to L-DOPA = 3',4'-dihydroxyphenylalanine) of the tandem repeats. In terms of tissue distribution, produced by the byssal gland.

It localises to the secreted. Its function is as follows. Provides adhesiveness to the mussel's foot. Mussels produce one of the strongest water insoluble glues. The mussel's adhesive is a bundle of threads, called a byssus, formed by a fibrous collagenous core coated with adhesive proteins. This Mytilus coruscus (Sea mussel) protein is Adhesive plaque matrix protein (FP1).